The chain runs to 417 residues: Glutamate-1-semialdehyde 2,1-aminomutase (417 aa).

Lys-263 carries the post-translational modification N6-(pyridoxal phosphate)lysine.

The protein belongs to the class-III pyridoxal-phosphate-dependent aminotransferase family. HemL subfamily. Pyridoxal 5'-phosphate is required as a cofactor.

It localises to the cytoplasm. It catalyses the reaction (S)-4-amino-5-oxopentanoate = 5-aminolevulinate. Its pathway is porphyrin-containing compound metabolism; protoporphyrin-IX biosynthesis; 5-aminolevulinate from L-glutamyl-tRNA(Glu): step 2/2. In Methanospirillum hungatei JF-1 (strain ATCC 27890 / DSM 864 / NBRC 100397 / JF-1), this protein is Glutamate-1-semialdehyde 2,1-aminomutase.